Reading from the N-terminus, the 236-residue chain is DNA repair protein RecO (236 aa).

This sequence belongs to the RecO family.

Functionally, involved in DNA repair and RecF pathway recombination. This is DNA repair protein RecO from Photobacterium profundum (strain SS9).